Here is a 215-residue protein sequence, read N- to C-terminus: Glutaredoxin 2 (215 aa).

The GST N-terminal domain occupies 1–77; the sequence is MKLYIYDHCP…YVDKLDGKPL (77 aa). Cys9 and Cys12 form a disulfide bridge.

It belongs to the glutaredoxin family.

Involved in reducing some disulfides in a coupled system with glutathione reductase. Does not act as hydrogen donor for ribonucleotide reductase. This Escherichia coli O157:H7 protein is Glutaredoxin 2 (grxB).